Reading from the N-terminus, the 616-residue chain is Glutamine--fructose-6-phosphate aminotransferase [isomerizing] (616 aa).

Cysteine 2 functions as the Nucleophile; for GATase activity in the catalytic mechanism. The region spanning 2–221 (CGIVGYVGTD…QDQIVTITPE (220 aa)) is the Glutamine amidotransferase type-2 domain. 2 SIS domains span residues 288-428 (LGDE…VRGT) and 461-606 (LAHW…VDQP). The active-site For Fru-6P isomerization activity is lysine 611.

As to quaternary structure, homodimer.

It localises to the cytoplasm. It carries out the reaction D-fructose 6-phosphate + L-glutamine = D-glucosamine 6-phosphate + L-glutamate. In terms of biological role, catalyzes the first step in hexosamine metabolism, converting fructose-6P into glucosamine-6P using glutamine as a nitrogen source. This is Glutamine--fructose-6-phosphate aminotransferase [isomerizing] from Leifsonia xyli subsp. xyli (strain CTCB07).